The sequence spans 111 residues: Mitochondrial import inner membrane translocase subunit Tim10B (111 aa).

The Twin CX3C motif motif lies at 24–48; it reads CFNACARDYTTSTLTKDEGSCVSQC. Cystine bridges form between cysteine 24-cysteine 48 and cysteine 28-cysteine 44. Positions 73 to 111 are disordered; it reads KQGEQSPTEAIKSAKPEPAVPAPEATPVETTPVIEENKQ. A compositionally biased stretch (low complexity) spans 94-105; sequence APEATPVETTPV.

Belongs to the small Tim family. As to quaternary structure, component of the TIM22 complex, whose core is composed of tim-22, associated with peripheral protein tin-9.2/tim-10b and the 70 kDa heterohexamer. In most cases, the 70 kDa complex is composed of TIMM9 and TIMM10.

The protein resides in the mitochondrion inner membrane. Functionally, component of the TIM22 complex, a complex that mediates the import and insertion of multi-pass transmembrane proteins into the mitochondrial inner membrane. The TIM22 complex forms a twin-pore translocase that uses the membrane potential as the external driving force. In the TIM22 complex, it may act as a docking point for the soluble 70 kDa complex that guides the target proteins in transit through the aqueous mitochondrial intermembrane space. The sequence is that of Mitochondrial import inner membrane translocase subunit Tim10B (tin-9.2) from Caenorhabditis elegans.